The sequence spans 355 residues: Protein RecA (355 aa).

Residue 67 to 74 participates in ATP binding; sequence GPESSGKT.

The protein belongs to the RecA family.

It is found in the cytoplasm. Can catalyze the hydrolysis of ATP in the presence of single-stranded DNA, the ATP-dependent uptake of single-stranded DNA by duplex DNA, and the ATP-dependent hybridization of homologous single-stranded DNAs. It interacts with LexA causing its activation and leading to its autocatalytic cleavage. The protein is Protein RecA of Shewanella baltica (strain OS223).